The sequence spans 259 residues: tRNA (guanine-N(7)-)-methyltransferase (259 aa).

The segment at 1 to 36 (MTFPSHNPPETGHPSAAPDEALPAAEAPVPGDPEAR) is disordered. A compositionally biased stretch (low complexity) spans 14–29 (PSAAPDEALPAAEAPV). 4 residues coordinate S-adenosyl-L-methionine: Glu91, Glu116, Asp143, and Asp166. Residue Asp166 is part of the active site. Substrate is bound by residues Lys170, Asp202, and 237-240 (TKFE).

The protein belongs to the class I-like SAM-binding methyltransferase superfamily. TrmB family.

The enzyme catalyses guanosine(46) in tRNA + S-adenosyl-L-methionine = N(7)-methylguanosine(46) in tRNA + S-adenosyl-L-homocysteine. Its pathway is tRNA modification; N(7)-methylguanine-tRNA biosynthesis. Functionally, catalyzes the formation of N(7)-methylguanine at position 46 (m7G46) in tRNA. This Aromatoleum aromaticum (strain DSM 19018 / LMG 30748 / EbN1) (Azoarcus sp. (strain EbN1)) protein is tRNA (guanine-N(7)-)-methyltransferase.